Here is a 358-residue protein sequence, read N- to C-terminus: Glycerophosphodiester phosphodiesterase, periplasmic (358 aa).

A signal peptide spans 1 to 25; that stretch reads MKLTLKNLSMAIMMSTIVMGSSAMA. The GP-PDE domain occupies 31–355; sequence KIVIAHRGAS…DFPDKAVKFL (325 aa). His-36 functions as the Proton acceptor in the catalytic mechanism. Positions 63 and 65 each coordinate Ca(2+). Residue His-78 is the Proton donor of the active site. Residue Glu-171 participates in Ca(2+) binding.

This sequence belongs to the glycerophosphoryl diester phosphodiesterase family. Homodimer. The cofactor is Ca(2+).

The protein resides in the periplasm. It catalyses the reaction a sn-glycero-3-phosphodiester + H2O = an alcohol + sn-glycerol 3-phosphate + H(+). Functionally, glycerophosphodiester phosphodiesterase hydrolyzes glycerophosphodiesters into glycerol-3-phosphate (G3P) and the corresponding alcohol. This is Glycerophosphodiester phosphodiesterase, periplasmic (glpQ) from Escherichia coli (strain K12).